Reading from the N-terminus, the 530-residue chain is TNF receptor-associated factor family protein DDB_G0272829 (530 aa).

The RING-type; degenerate zinc finger occupies 35 to 81 (CQICEGLLISSLIPNRMKALQCINGHCFCLTCWESILEIKSECPTCR). TRAF-type zinc fingers lie at residues 134–188 (RHES…KQMQ) and 189–246 (GHIL…NDND). Disordered regions lie at residues 242 to 267 (NNDN…LSSS), 391 to 432 (TTTT…DNQG), and 483 to 530 (FNQL…GTSL). Composition is skewed to low complexity over residues 253-267 (NNSN…LSSS), 391-415 (TTTT…NNNN), and 485-502 (QLSQ…SQSL). The stretch at 361–422 (ILEHQQQQNQ…NNNNEDEEDD (62 aa)) forms a coiled coil. The segment covering 509–530 (ITINQNQNTPSNPFSIFSGTSL) has biased composition (polar residues).

It belongs to the TNF receptor-associated factor family.

It localises to the cytoplasm. In terms of biological role, probable adapter protein and signal transducer that links members of the tumor necrosis factor receptor family to different signaling pathways by association with the receptor cytoplasmic domain and kinases. The chain is TNF receptor-associated factor family protein DDB_G0272829 from Dictyostelium discoideum (Social amoeba).